The following is a 192-amino-acid chain: dTTP/UTP pyrophosphatase (192 aa).

D68 (proton acceptor) is an active-site residue.

It belongs to the Maf family. YhdE subfamily. A divalent metal cation serves as cofactor.

Its subcellular location is the cytoplasm. The catalysed reaction is dTTP + H2O = dTMP + diphosphate + H(+). The enzyme catalyses UTP + H2O = UMP + diphosphate + H(+). Functionally, nucleoside triphosphate pyrophosphatase that hydrolyzes dTTP and UTP. May have a dual role in cell division arrest and in preventing the incorporation of modified nucleotides into cellular nucleic acids. The chain is dTTP/UTP pyrophosphatase from Cereibacter sphaeroides (strain ATCC 17023 / DSM 158 / JCM 6121 / CCUG 31486 / LMG 2827 / NBRC 12203 / NCIMB 8253 / ATH 2.4.1.) (Rhodobacter sphaeroides).